We begin with the raw amino-acid sequence, 98 residues long: Large ribosomal subunit protein bL21 (98 aa).

It belongs to the bacterial ribosomal protein bL21 family. In terms of assembly, part of the 50S ribosomal subunit. Contacts protein L20.

Its function is as follows. This protein binds to 23S rRNA in the presence of protein L20. In Novosphingobium aromaticivorans (strain ATCC 700278 / DSM 12444 / CCUG 56034 / CIP 105152 / NBRC 16084 / F199), this protein is Large ribosomal subunit protein bL21.